We begin with the raw amino-acid sequence, 162 residues long: NADH-quinone oxidoreductase subunit I (162 aa).

4Fe-4S ferredoxin-type domains lie at 52 to 82 (LRRY…IEAG) and 93 to 122 (TRYD…EGPN). The [4Fe-4S] cluster site is built by Cys62, Cys65, Cys68, Cys72, Cys102, Cys105, Cys108, and Cys112.

Belongs to the complex I 23 kDa subunit family. NDH-1 is composed of 14 different subunits. Subunits NuoA, H, J, K, L, M, N constitute the membrane sector of the complex. Requires [4Fe-4S] cluster as cofactor.

It localises to the cell inner membrane. The catalysed reaction is a quinone + NADH + 5 H(+)(in) = a quinol + NAD(+) + 4 H(+)(out). Its function is as follows. NDH-1 shuttles electrons from NADH, via FMN and iron-sulfur (Fe-S) centers, to quinones in the respiratory chain. The immediate electron acceptor for the enzyme in this species is believed to be ubiquinone. Couples the redox reaction to proton translocation (for every two electrons transferred, four hydrogen ions are translocated across the cytoplasmic membrane), and thus conserves the redox energy in a proton gradient. This is NADH-quinone oxidoreductase subunit I from Methylocella silvestris (strain DSM 15510 / CIP 108128 / LMG 27833 / NCIMB 13906 / BL2).